A 151-amino-acid polypeptide reads, in one-letter code: Probable cGMP 3',5'-cyclic phosphodiesterase subunit delta (151 aa).

It belongs to the PDE6D/unc-119 family. Interacts with Pde6.

It localises to the nucleus. It is found in the cytoplasm. The chain is Probable cGMP 3',5'-cyclic phosphodiesterase subunit delta from Drosophila mojavensis (Fruit fly).